The primary structure comprises 157 residues: Acetyltransferase PseH (157 aa).

One can recognise an N-acetyltransferase domain in the interval 5–152; the sequence is KNFTELNSQE…YHICLKQSDC (148 aa).

Catalyzes the third step in the biosynthesis of pseudaminic acid, a sialic-acid-like sugar that is used to modify flagellin. Mediates N-4 acetylation of UDP-4-amino-4,6-dideoxy-beta-L-AltNAc to form UDP-2,4-diacetamido-2,4,6-trideoxy-beta-L-altropyranose. The sequence is that of Acetyltransferase PseH (pseH) from Campylobacter jejuni subsp. jejuni serotype O:23/36 (strain 81-176).